We begin with the raw amino-acid sequence, 361 residues long: Membrane-bound lytic murein transglycosylase B (361 aa).

An N-terminal signal peptide occupies residues 1–18; it reads MFKRRYVTLLPLFVLLAA. Cys19 carries N-palmitoyl cysteine lipidation. A lipid anchor (S-diacylglycerol cysteine) is attached at Cys19. Residue Glu162 is part of the active site.

Monomer.

The protein resides in the cell outer membrane. The enzyme catalyses Exolytic cleavage of the (1-&gt;4)-beta-glycosidic linkage between N-acetylmuramic acid (MurNAc) and N-acetylglucosamine (GlcNAc) residues in peptidoglycan, from either the reducing or the non-reducing ends of the peptidoglycan chains, with concomitant formation of a 1,6-anhydrobond in the MurNAc residue.. Functionally, murein-degrading enzyme. Catalyzes the cleavage of the glycosidic bonds between N-acetylmuramic acid and N-acetylglucosamine residues in peptidoglycan. May play a role in recycling of muropeptides during cell elongation and/or cell division. This Escherichia coli (strain K12) protein is Membrane-bound lytic murein transglycosylase B (mltB).